Consider the following 161-residue polypeptide: UPF0225 protein NTHI0386 (161 aa).

Belongs to the UPF0225 family.

The protein is UPF0225 protein NTHI0386 of Haemophilus influenzae (strain 86-028NP).